We begin with the raw amino-acid sequence, 220 residues long: MHSLNQKIKAFSRDNLRKQCTRVTTLTGKKLIETWEDATVHVVETEPSGGGGCGYVQDLTLDLQVGVIKPWLLLGSQDAAHDLELLRKHKVTHILNVAYGVENAFLSEFTYKTISILDVPETNILSYFPECFEFIEQAKLKDGVVLVHCNAGVSRAAAIVIGFLMSSEEATFTTALSLVKEARPSICPNPGFMEQLRTYQVGKESNGGDKVPAEDTTHGL.

Methionine 1 is modified (N-acetylmethionine). Residues 64–205 form the Tyrosine-protein phosphatase domain; it reads QVGVIKPWLL…LRTYQVGKES (142 aa). Cysteine 149 acts as the Phosphocysteine intermediate in catalysis.

It belongs to the protein-tyrosine phosphatase family. Non-receptor class dual specificity subfamily.

It catalyses the reaction O-phospho-L-tyrosyl-[protein] + H2O = L-tyrosyl-[protein] + phosphate. It carries out the reaction O-phospho-L-seryl-[protein] + H2O = L-seryl-[protein] + phosphate. The catalysed reaction is O-phospho-L-threonyl-[protein] + H2O = L-threonyl-[protein] + phosphate. Phosphatase activity is enhanced by Ca(2+) and Mn(2+). Its function is as follows. Has a dual specificity toward Ser/Thr and Tyr-containing proteins. The chain is Dual specificity protein phosphatase 19 from Mus musculus (Mouse).